The chain runs to 347 residues: tRNA N6-adenosine threonylcarbamoyltransferase (347 aa).

2 residues coordinate Fe cation: histidine 113 and histidine 117. Residues 136–140 (LVSGG), aspartate 170, glycine 183, aspartate 187, and asparagine 282 each bind substrate. A Fe cation-binding site is contributed by aspartate 310.

The protein belongs to the KAE1 / TsaD family. Fe(2+) serves as cofactor.

The protein resides in the cytoplasm. The enzyme catalyses L-threonylcarbamoyladenylate + adenosine(37) in tRNA = N(6)-L-threonylcarbamoyladenosine(37) in tRNA + AMP + H(+). Its function is as follows. Required for the formation of a threonylcarbamoyl group on adenosine at position 37 (t(6)A37) in tRNAs that read codons beginning with adenine. Is involved in the transfer of the threonylcarbamoyl moiety of threonylcarbamoyl-AMP (TC-AMP) to the N6 group of A37, together with TsaE and TsaB. TsaD likely plays a direct catalytic role in this reaction. This Cutibacterium acnes (strain DSM 16379 / KPA171202) (Propionibacterium acnes) protein is tRNA N6-adenosine threonylcarbamoyltransferase.